Consider the following 293-residue polypeptide: Probable porphobilinogen deaminase (293 aa).

S-(dipyrrolylmethanemethyl)cysteine is present on C233.

It belongs to the HMBS family. Requires dipyrromethane as cofactor.

The catalysed reaction is 4 porphobilinogen + H2O = hydroxymethylbilane + 4 NH4(+). The protein operates within porphyrin-containing compound metabolism; protoporphyrin-IX biosynthesis; coproporphyrinogen-III from 5-aminolevulinate: step 2/4. Functionally, tetrapolymerization of the monopyrrole PBG into the hydroxymethylbilane pre-uroporphyrinogen in several discrete steps. This chain is Probable porphobilinogen deaminase, found in Saccharolobus islandicus (strain Y.N.15.51 / Yellowstone #2) (Sulfolobus islandicus).